The sequence spans 360 residues: Aurora kinase B (360 aa).

The region spanning 93-343 is the Protein kinase domain; that stretch reads FDIGRPLGKG…LKGVMEHPWV (251 aa). Residues 99 to 107 and K122 each bind ATP; that span reads LGKGKFGNV. The Proton acceptor role is filled by D216.

It belongs to the protein kinase superfamily. Ser/Thr protein kinase family. Aurora subfamily. As to quaternary structure, component of the chromosomal passenger complex (CPC).

Its subcellular location is the nucleus. It is found in the chromosome. The protein localises to the centromere. It localises to the cytoplasm. The protein resides in the cytoskeleton. Its subcellular location is the spindle. It is found in the midbody. The catalysed reaction is L-seryl-[protein] + ATP = O-phospho-L-seryl-[protein] + ADP + H(+). It carries out the reaction L-threonyl-[protein] + ATP = O-phospho-L-threonyl-[protein] + ADP + H(+). Kinase activity is stimulated by cell-cycle specific phosphorylation. Functionally, serine/threonine-protein kinase component of the chromosomal passenger complex (CPC), a complex that acts as a key regulator of mitosis. The CPC complex has essential functions at the centromere in ensuring correct chromosome alignment and segregation and is required for chromatin-induced microtubule stabilization and spindle assembly. Involved in the bipolar attachment of spindle microtubules to kinetochores and is a key regulator for the onset of cytokinesis during mitosis. Required for central/midzone spindle assembly and cleavage furrow formation. Key component of the cytokinesis checkpoint, a process required to delay abscission to prevent both premature resolution of intercellular chromosome bridges and accumulation of DNA damage. Phosphorylates 'Ser-10' of histone H3 during mitosis. This Xenopus tropicalis (Western clawed frog) protein is Aurora kinase B.